A 154-amino-acid polypeptide reads, in one-letter code: Large ribosomal subunit protein uL13 (154 aa).

This sequence belongs to the universal ribosomal protein uL13 family. In terms of assembly, part of the 50S ribosomal subunit.

Its function is as follows. This protein is one of the early assembly proteins of the 50S ribosomal subunit, although it is not seen to bind rRNA by itself. It is important during the early stages of 50S assembly. This Agrobacterium fabrum (strain C58 / ATCC 33970) (Agrobacterium tumefaciens (strain C58)) protein is Large ribosomal subunit protein uL13.